The following is a 581-amino-acid chain: Mitosis inhibitor protein kinase mik1 (581 aa).

Disordered stretches follow at residues 43-71 (GHEE…HTPM) and 148-178 (NLTN…PLSP). Residues 59–71 (KPSNTKRSPHTPM) are compositionally biased toward polar residues. Residues 160 to 169 (PCKKGTKIKL) are compositionally biased toward basic residues. Residues 289–561 (FQQVKPIHES…LLAMPEMIFI (273 aa)) form the Protein kinase domain. ATP is bound by residues 295–303 (IHESDFSFV) and Lys320. Asp417 (proton acceptor) is an active-site residue. The Mg(2+) site is built by Asn422 and Asp435.

This sequence belongs to the protein kinase superfamily. Ser/Thr protein kinase family. WEE1 subfamily.

It catalyses the reaction L-seryl-[protein] + ATP = O-phospho-L-seryl-[protein] + ADP + H(+). The catalysed reaction is L-threonyl-[protein] + ATP = O-phospho-L-threonyl-[protein] + ADP + H(+). Functionally, protein kinase that acts both on serines and on tyrosines. It acts as a negative regulator of entry into mitosis (G2 to M transition). Phosphorylates and inhibits cdc2. This Schizosaccharomyces pombe (strain 972 / ATCC 24843) (Fission yeast) protein is Mitosis inhibitor protein kinase mik1 (mik1).